The following is a 339-amino-acid chain: GTPase Obg (339 aa).

Residues 1–159 form the Obg domain; it reads MKFLDQAKVY…RALWLRLKLI (159 aa). One can recognise an OBG-type G domain in the interval 160 to 327; it reads ADGGIIGLPN…VLRSVAHVIE (168 aa). GTP-binding positions include 166–173, 191–195, 212–215, 279–282, and 308–310; these read GLPNAGKS, FTTLY, DIPG, SQVD, and SAV. Mg(2+)-binding residues include S173 and T193.

It belongs to the TRAFAC class OBG-HflX-like GTPase superfamily. OBG GTPase family. In terms of assembly, monomer. The cofactor is Mg(2+).

The protein resides in the cytoplasm. Its function is as follows. An essential GTPase which binds GTP, GDP and possibly (p)ppGpp with moderate affinity, with high nucleotide exchange rates and a fairly low GTP hydrolysis rate. Plays a role in control of the cell cycle, stress response, ribosome biogenesis and in those bacteria that undergo differentiation, in morphogenesis control. In Bartonella bacilliformis (strain ATCC 35685 / KC583 / Herrer 020/F12,63), this protein is GTPase Obg.